A 630-amino-acid chain; its full sequence is Protein zwilch homolog (630 aa).

Belongs to the ZWILCH family. As to quaternary structure, component of the RZZ complex composed of rod-1, czw-1 and zwl-1. Interacts with the spindly-like protein spdl-1. Interacts with NDC80 complex component ndc-80.

Its subcellular location is the cytoplasm. The protein resides in the cell cortex. It is found in the chromosome. It localises to the centromere. The protein localises to the kinetochore. Its subcellular location is the cytoskeleton. The protein resides in the spindle. Functionally, essential component of the mitotic checkpoint, which prevents cells from prematurely exiting mitosis. Required for chromosome segregation, the assembly of the dynein-dynactin and mdf-1-mdf-2 complexes onto kinetochores and spindle pole separation. Its function related to the spindle assembly machinery and kinetochore-microtubule attachments likely depends on its association in the mitotic RZZ complex. The RZZ complex recruits the spindly-like protein spdl-1 to kinetochores. To prevent irregular chromosome segregation, the complex also inhibits the attachment of the kinetochore-associated NDC80 complex to microtubules. The recruitment of spdl-1 to kinetochores relieves this inhibition. Required for embryonic development. This chain is Protein zwilch homolog (zwl-1), found in Caenorhabditis elegans.